The following is a 313-amino-acid chain: tRNA dimethylallyltransferase (313 aa).

An ATP-binding site is contributed by 10–17; sequence GPTASGKT. 12-17 is a binding site for substrate; that stretch reads TASGKT. Interaction with substrate tRNA stretches follow at residues 35-38, 159-163, and 240-245; these read DSAM, QRIQR, and RCVGYR.

The protein belongs to the IPP transferase family. Monomer. Requires Mg(2+) as cofactor.

It catalyses the reaction adenosine(37) in tRNA + dimethylallyl diphosphate = N(6)-dimethylallyladenosine(37) in tRNA + diphosphate. Its function is as follows. Catalyzes the transfer of a dimethylallyl group onto the adenine at position 37 in tRNAs that read codons beginning with uridine, leading to the formation of N6-(dimethylallyl)adenosine (i(6)A). The protein is tRNA dimethylallyltransferase of Legionella pneumophila (strain Corby).